The chain runs to 337 residues: 2-oxoglutarate-Fe(II) type oxidoreductase (337 aa).

In terms of domain architecture, Fe2OG dioxygenase spans 179–282; it reads AIATLRYLHY…RYSIPFFFTG (104 aa). Fe cation-binding residues include His205, Asp207, and His263. Arg273 contributes to the 2-oxoglutarate binding site.

The protein belongs to the iron/ascorbate-dependent oxidoreductase family. Fe(2+) is required as a cofactor. Endocrocin is specifically produced in conidia.

It participates in secondary metabolite biosynthesis. Functionally, 2-oxoglutarate-Fe(II) type oxidoreductase; part of the gene cluster that mediates the biosynthesis of endocrocin, a simple anthraquinone interesting for many biotechnological applications. The pathway begins with the synthesis of atrochrysone thioester by the polyketide synthase (PKS) encA. The atrochrysone carboxyl ACP thioesterase encB then breaks the thioester bond and releases the atrochrysone carboxylic acid from encA. The atrochrysone carboxylic acid is then converted to endocrocin anthrone which is further oxidized into endocrocin by encC. The exact function of encD has not been identified yet, but it negatively regulates endocrocin production, likely through the modification of endocrocin itself. This Aspergillus fumigatus (strain ATCC MYA-4609 / CBS 101355 / FGSC A1100 / Af293) (Neosartorya fumigata) protein is 2-oxoglutarate-Fe(II) type oxidoreductase.